A 296-amino-acid polypeptide reads, in one-letter code: Farnesyl diphosphate synthase (296 aa).

Lys46, Arg49, and His78 together coordinate isopentenyl diphosphate. The Mg(2+) site is built by Asp85 and Asp91. A (2E)-geranyl diphosphate-binding site is contributed by Arg96. Position 97 (Arg97) interacts with isopentenyl diphosphate. (2E)-geranyl diphosphate-binding residues include Lys182, Thr183, Gln220, and Lys237.

Belongs to the FPP/GGPP synthase family. It depends on Mg(2+) as a cofactor.

Its subcellular location is the cytoplasm. It catalyses the reaction isopentenyl diphosphate + (2E)-geranyl diphosphate = (2E,6E)-farnesyl diphosphate + diphosphate. This chain is Farnesyl diphosphate synthase (ispA), found in Bacillus subtilis (strain 168).